The following is an 811-amino-acid chain: DNA gyrase subunit A (811 aa).

A Topo IIA-type catalytic domain is found at 30–493; sequence LPDVRDGLKP…LEEDIGKEDL (464 aa). Residue tyrosine 118 is the O-(5'-phospho-DNA)-tyrosine intermediate of the active site. Positions 520-526 match the GyrA-box motif; that stretch reads QGRGGRG.

This sequence belongs to the type II topoisomerase GyrA/ParC subunit family. Heterotetramer, composed of two GyrA and two GyrB chains. In the heterotetramer, GyrA contains the active site tyrosine that forms a transient covalent intermediate with DNA, while GyrB binds cofactors and catalyzes ATP hydrolysis.

It localises to the cytoplasm. It catalyses the reaction ATP-dependent breakage, passage and rejoining of double-stranded DNA.. Functionally, a type II topoisomerase that negatively supercoils closed circular double-stranded (ds) DNA in an ATP-dependent manner to modulate DNA topology and maintain chromosomes in an underwound state. Negative supercoiling favors strand separation, and DNA replication, transcription, recombination and repair, all of which involve strand separation. Also able to catalyze the interconversion of other topological isomers of dsDNA rings, including catenanes and knotted rings. Type II topoisomerases break and join 2 DNA strands simultaneously in an ATP-dependent manner. This Deinococcus deserti (strain DSM 17065 / CIP 109153 / LMG 22923 / VCD115) protein is DNA gyrase subunit A.